A 280-amino-acid polypeptide reads, in one-letter code: Lysosome-associated membrane glycoprotein 5 (280 aa).

The N-terminal stretch at 1 to 29 (MDLRRRALLGVDGLRVLLMLFHTVTRIMA) is a signal peptide. At 30 to 235 (EQEVENLSGL…PVDEREQLEE (206 aa)) the chain is on the extracellular side. 2 N-linked (GlcNAc...) asparagine glycosylation sites follow: Asn-35 and Asn-53. A helical membrane pass occupies residues 236-256 (TLPLILGLILGLVIVVTLVIY). Topologically, residues 257–280 (HIHHKMTANQVQIPRDRSQYKHMG) are cytoplasmic.

It belongs to the LAMP family. In terms of processing, glycosylated.

It localises to the cytoplasmic vesicle membrane. It is found in the cell membrane. The protein localises to the cell projection. Its subcellular location is the dendrite. The protein resides in the cytoplasmic vesicle. It localises to the secretory vesicle. It is found in the synaptic vesicle membrane. The protein localises to the growth cone membrane. Its subcellular location is the early endosome membrane. The protein resides in the recycling endosome. It localises to the endoplasmic reticulum-Golgi intermediate compartment membrane. It is found in the endosome membrane. Functionally, plays a role in short-term synaptic plasticity in a subset of GABAergic neurons in the brain. In Bos taurus (Bovine), this protein is Lysosome-associated membrane glycoprotein 5 (LAMP5).